The following is a 122-amino-acid chain: Large ribosomal subunit protein uL14 (122 aa).

Belongs to the universal ribosomal protein uL14 family. Part of the 50S ribosomal subunit. Forms a cluster with proteins L3 and L19. In the 70S ribosome, L14 and L19 interact and together make contacts with the 16S rRNA in bridges B5 and B8.

Functionally, binds to 23S rRNA. Forms part of two intersubunit bridges in the 70S ribosome. The polypeptide is Large ribosomal subunit protein uL14 (Neisseria meningitidis serogroup C (strain 053442)).